A 274-amino-acid chain; its full sequence is MQFSKMHGLGNDFMVVDAVTQNVYFSPEMIRRLSDRHCGVGFDQLLVVEPPYDPELDFHYRIFNADGSEVAQCGNGARCFARFVRMKNLTNKRDIHVSTQTGRMVLTVTEDDSVRVNMGEPNFDPQQVLFRAARVEKTYIMRAAEQTVLCGVVSMGNPHCVIAVDSVDNAPVATLGPVLESHERFPERANIGFMQVLNRGHIRLRVYERGAGETQACGSGACAAVAVGISQGQLAEQVQVELTGGRLAISWRGPGHPLYMTGPATHIYDGFIHL.

Positions 11, 44, and 64 each coordinate substrate. Residue cysteine 73 is the Proton donor of the active site. Substrate contacts are provided by residues 74-75, asparagine 157, asparagine 190, and 208-209; these read GN and ER. The Proton acceptor role is filled by cysteine 217. 218-219 lines the substrate pocket; it reads GS.

The protein belongs to the diaminopimelate epimerase family. In terms of assembly, homodimer.

It localises to the cytoplasm. The catalysed reaction is (2S,6S)-2,6-diaminopimelate = meso-2,6-diaminopimelate. It functions in the pathway amino-acid biosynthesis; L-lysine biosynthesis via DAP pathway; DL-2,6-diaminopimelate from LL-2,6-diaminopimelate: step 1/1. Functionally, catalyzes the stereoinversion of LL-2,6-diaminopimelate (L,L-DAP) to meso-diaminopimelate (meso-DAP), a precursor of L-lysine and an essential component of the bacterial peptidoglycan. The protein is Diaminopimelate epimerase of Sodalis glossinidius (strain morsitans).